Consider the following 158-residue polypeptide: Probable transcription regulator ArfM (158 aa).

Its function is as follows. Activates, in anaerobic conditions, the transcription of the fermentative operons lctEP and alsDS, of the hmp gene encoding a flavohemoglobin-like protein, the nitrite reductase operon nasDE and the heme biosynthesis genes hemN and hemZ. This chain is Probable transcription regulator ArfM (arfM), found in Bacillus subtilis (strain 168).